Consider the following 167-residue polypeptide: Crossover junction endodeoxyribonuclease RuvC (167 aa).

Residues D11, E71, and D143 contribute to the active site. D11, E71, and D143 together coordinate Mg(2+).

It belongs to the RuvC family. As to quaternary structure, homodimer which binds Holliday junction (HJ) DNA. The HJ becomes 2-fold symmetrical on binding to RuvC with unstacked arms; it has a different conformation from HJ DNA in complex with RuvA. In the full resolvosome a probable DNA-RuvA(4)-RuvB(12)-RuvC(2) complex forms which resolves the HJ. Mg(2+) is required as a cofactor.

The protein resides in the cytoplasm. It carries out the reaction Endonucleolytic cleavage at a junction such as a reciprocal single-stranded crossover between two homologous DNA duplexes (Holliday junction).. In terms of biological role, the RuvA-RuvB-RuvC complex processes Holliday junction (HJ) DNA during genetic recombination and DNA repair. Endonuclease that resolves HJ intermediates. Cleaves cruciform DNA by making single-stranded nicks across the HJ at symmetrical positions within the homologous arms, yielding a 5'-phosphate and a 3'-hydroxyl group; requires a central core of homology in the junction. The consensus cleavage sequence is 5'-(A/T)TT(C/G)-3'. Cleavage occurs on the 3'-side of the TT dinucleotide at the point of strand exchange. HJ branch migration catalyzed by RuvA-RuvB allows RuvC to scan DNA until it finds its consensus sequence, where it cleaves and resolves the cruciform DNA. The protein is Crossover junction endodeoxyribonuclease RuvC of Hyphomonas neptunium (strain ATCC 15444).